A 292-amino-acid chain; its full sequence is 4-hydroxy-tetrahydrodipicolinate synthase (292 aa).

T45 contacts pyruvate. Residue Y133 is the Proton donor/acceptor of the active site. The active-site Schiff-base intermediate with substrate is the K161. I203 serves as a coordination point for pyruvate.

This sequence belongs to the DapA family. As to quaternary structure, homotetramer; dimer of dimers.

It localises to the cytoplasm. The catalysed reaction is L-aspartate 4-semialdehyde + pyruvate = (2S,4S)-4-hydroxy-2,3,4,5-tetrahydrodipicolinate + H2O + H(+). It functions in the pathway amino-acid biosynthesis; L-lysine biosynthesis via DAP pathway; (S)-tetrahydrodipicolinate from L-aspartate: step 3/4. Catalyzes the condensation of (S)-aspartate-beta-semialdehyde [(S)-ASA] and pyruvate to 4-hydroxy-tetrahydrodipicolinate (HTPA). The chain is 4-hydroxy-tetrahydrodipicolinate synthase from Herminiimonas arsenicoxydans.